We begin with the raw amino-acid sequence, 786 residues long: E3 ubiquitin-protein ligase pub3 (786 aa).

The C2 domain occupies 1–109 (MEQGAKRVRF…RSNREVSLTR (109 aa)). 2 disordered regions span residues 134–225 (IRAP…NSNA) and 263–306 (TWTR…DSGN). Over residues 142 to 193 (SSTTANRTTSTPTTTTARTTRTTPRPTATTNTSNQSTSNSTRNGTSAATSNG) the composition is skewed to low complexity. Positions 204–213 (HRSSPVTNRQ) are enriched in polar residues. Residues 214-225 (TNNTSALSNSNA) show a composition bias toward low complexity. The region spanning 236 to 269 (GRLPPGWERRADSLGRTYYVDHNTRTTTWTRPAS) is the WW 1 domain. Polar residues-rich tracts occupy residues 263–285 (TWTR…QRLN) and 295–305 (SNPSLMQSDSG). 2 consecutive WW domains span residues 306-339 (NDLP…DPRN) and 364-397 (GPLP…DPRL). The HECT domain maps to 453 to 786 (SAHDLKKRLM…VENTVGFGNE (334 aa)). Cys-754 (glycyl thioester intermediate) is an active-site residue.

It catalyses the reaction S-ubiquitinyl-[E2 ubiquitin-conjugating enzyme]-L-cysteine + [acceptor protein]-L-lysine = [E2 ubiquitin-conjugating enzyme]-L-cysteine + N(6)-ubiquitinyl-[acceptor protein]-L-lysine.. The protein operates within protein modification; protein ubiquitination. In terms of biological role, E3 ubiquitin-protein ligase which accepts ubiquitin from an E2 ubiquitin-conjugating enzyme in the form of a thioester and then directly transfers the ubiquitin to targeted substrates. The protein is E3 ubiquitin-protein ligase pub3 (pub3) of Schizosaccharomyces pombe (strain 972 / ATCC 24843) (Fission yeast).